Consider the following 127-residue polypeptide: Apolipoprotein C-IV (127 aa).

Residues 1–27 (MSLLRNRLQDLPALCLCVLVLACIGAC) form the signal peptide.

Belongs to the apolipoprotein C4 family.

It is found in the secreted. May participate in lipoprotein metabolism. In Chlorocebus sabaeus (Green monkey), this protein is Apolipoprotein C-IV (APOC4).